We begin with the raw amino-acid sequence, 455 residues long: DENN domain-containing protein 11 (455 aa).

Residues 1 to 59 (MVEQGDAAPLLRWAEGPAVSVPQDPALQAGGWVRGGSGEGRVAAEAPRRREPDEPAPPE) form a disordered region. Val-2 bears the N-acetylvaline mark. The region spanning 15-187 (EGPAVSVPQD…QLEMPGHYSH (173 aa)) is the uDENN domain. Arg-41 bears the Omega-N-methylarginine mark. The region spanning 214 to 362 (WLPSIHRYMY…INSADREKYR (149 aa)) is the cDENN domain. Positions 364–455 (LNEQRQMLLY…MLVIDNPCCP (92 aa)) constitute a dDENN domain.

The protein belongs to the DENND11 family.

Its function is as follows. Probable guanine nucleotide exchange factor (GEF). May promote the exchange of GDP to GTP, converting inactive GDP-bound small GTPases into their active GTP-bound form. May play a role in neuritogenesis, as well as in neuronal recovery and/or restructuring in the hippocampus following transient cerebral ischemia. This is DENN domain-containing protein 11 (Dennd11) from Mus musculus (Mouse).